The following is an 813-amino-acid chain: Enhancer of polycomb homolog 1 (813 aa).

Disordered stretches follow at residues 310–403 (FKHQ…PFAF), 484–513 (MLSS…SKDL), and 528–577 (FRPR…SSGS). Over residues 311–333 (KHQDATDSKEFKVNKQDKADLIR) the composition is skewed to basic and acidic residues. Residue Lys-319 forms a Glycyl lysine isopeptide (Lys-Gly) (interchain with G-Cter in SUMO2) linkage. Residues 346 to 361 (PPSAAAPQQQSPAALP) show a composition bias toward low complexity. Over residues 486–513 (SSPQPSPVNQFANTSEPNTSDRSSSKDL) the composition is skewed to polar residues. At Ser-538 the chain carries Phosphoserine. The span at 564-577 (TCSTSTQNRSSSGS) shows a compositional bias: low complexity. Residue Lys-650 forms a Glycyl lysine isopeptide (Lys-Gly) (interchain with G-Cter in SUMO2) linkage. The segment at 779-813 (VPSSSSVDSVPRENHESEKPALNNIADNTVAMEVT) is disordered. Residues 788-797 (VPRENHESEK) are compositionally biased toward basic and acidic residues.

Belongs to the enhancer of polycomb family. In terms of assembly, component of the NuA4 histone acetyltransferase complex which contains the catalytic subunit KAT5/TIP60 and the subunits EP400, TRRAP/PAF400, BRD8/SMAP, EPC1, DMAP1/DNMAP1, RUVBL1/TIP49, RUVBL2, ING3, actin, ACTL6A/BAF53A, MORF4L1/MRG15, MORF4L2/MRGX, MRGBP, YEATS4/GAS41, VPS72/YL1 and MEAF6. KAT5/TIP60, EPC1, and ING3 together constitute a minimal HAT complex termed Piccolo NuA4. Component of a NuA4-related complex which contains EP400, TRRAP/PAF400, SRCAP, BRD8/SMAP, EPC1, DMAP1/DNMAP1, RUVBL1/TIP49, RUVBL2, actin, ACTL6A/BAF53A, VPS72 and YEATS4/GAS41. Interacts with TRIM27. Interacts with MBTD1; interaction is direct and promotes recruitment of MBTD1 into the NuA4 histone acetyltransferase complex. In terms of tissue distribution, expressed in adult brain, heart, kidney, liver, lung, skeletal muscle and testis. Expressed in male germ cells, present in round spermatids of steps 1 to 4.

It localises to the nucleus. The protein resides in the cytoplasm. Component of the NuA4 histone acetyltransferase (HAT) complex, a multiprotein complex involved in transcriptional activation of select genes principally by acetylation of nucleosomal histones H4 and H2A. The NuA4 complex plays a direct role in repair of DNA double-strand breaks (DSBs) by promoting homologous recombination (HR). The NuA4 complex is also required for spermatid development by promoting acetylation of histones: histone acetylation is required for histone replacement during the transition from round to elongating spermatids. In the NuA4 complex, EPC1 is required to recruit MBTD1 into the complex. The protein is Enhancer of polycomb homolog 1 of Mus musculus (Mouse).